A 282-amino-acid chain; its full sequence is MRIAVPNKGRLHEPSEELLERAGLHLVDGADRQLHADTVDPDVTVLYARAADIPEYVADGAADVGITGLDQVRESDTDDLVELRDLDFGRCRLVLAAPEESDIETVYDFEDGRIATEFPKITRRYFDRVDVDVDVTEVSGATELTPHVDIADGIVDITSTGTTLRMNRLAVVDEVLESSVRLFAREDTADNEKVKQVDTALGSVLAADDKRYLMMNAPEDALDDVKDVLPGMGGPTVMDIAGSDQLAVHAVVEERAVFETISSLKDVGASDILVTEIERLVE.

Belongs to the ATP phosphoribosyltransferase family. Long subfamily. Mg(2+) serves as cofactor.

Its subcellular location is the cytoplasm. It carries out the reaction 1-(5-phospho-beta-D-ribosyl)-ATP + diphosphate = 5-phospho-alpha-D-ribose 1-diphosphate + ATP. It participates in amino-acid biosynthesis; L-histidine biosynthesis; L-histidine from 5-phospho-alpha-D-ribose 1-diphosphate: step 1/9. With respect to regulation, feedback inhibited by histidine. Catalyzes the condensation of ATP and 5-phosphoribose 1-diphosphate to form N'-(5'-phosphoribosyl)-ATP (PR-ATP). Has a crucial role in the pathway because the rate of histidine biosynthesis seems to be controlled primarily by regulation of HisG enzymatic activity. The polypeptide is ATP phosphoribosyltransferase (Haloarcula marismortui (strain ATCC 43049 / DSM 3752 / JCM 8966 / VKM B-1809) (Halobacterium marismortui)).